A 295-amino-acid polypeptide reads, in one-letter code: GDP-polyphosphate phosphotransferase (295 aa).

Positions 1–28 (MDIPSVDVSTATNDGASSRAKGHRSAAP) are disordered. A compositionally biased stretch (polar residues) spans 7–16 (DVSTATNDGA). 2 positions are modified to phosphohistidine: His-115 and His-247.

This sequence belongs to the polyphosphate kinase 2 (PPK2) family. Class I subfamily. Interacts with Ndk. In terms of processing, autophosphorylated at His-115 and His-247 using polyP as a phosphate donor.

It catalyses the reaction [phosphate](n) + GTP = [phosphate](n+1) + GDP. Uses inorganic polyphosphate (polyP) as a donor to convert GDP to GTP. In addition, modulates nucleotide triphosphate synthesis catalyzed by the nucleoside diphosphate kinase (Ndk) in favor of GTP production over CTP or UTP. Plays an important role in survival of M.tuberculosis in macrophages. The polypeptide is GDP-polyphosphate phosphotransferase (Mycobacterium tuberculosis (strain ATCC 25618 / H37Rv)).